The sequence spans 394 residues: ATP phosphoribosyltransferase regulatory subunit (394 aa).

Belongs to the class-II aminoacyl-tRNA synthetase family. HisZ subfamily. As to quaternary structure, heteromultimer composed of HisG and HisZ subunits.

Its subcellular location is the cytoplasm. It participates in amino-acid biosynthesis; L-histidine biosynthesis; L-histidine from 5-phospho-alpha-D-ribose 1-diphosphate: step 1/9. Its function is as follows. Required for the first step of histidine biosynthesis. May allow the feedback regulation of ATP phosphoribosyltransferase activity by histidine. In Pseudomonas aeruginosa (strain LESB58), this protein is ATP phosphoribosyltransferase regulatory subunit.